The primary structure comprises 98 residues: Large ribosomal subunit protein uL23 (98 aa).

The protein belongs to the universal ribosomal protein uL23 family. Part of the 50S ribosomal subunit. Contacts protein L29, and trigger factor when it is bound to the ribosome.

In terms of biological role, one of the early assembly proteins it binds 23S rRNA. One of the proteins that surrounds the polypeptide exit tunnel on the outside of the ribosome. Forms the main docking site for trigger factor binding to the ribosome. This Saccharophagus degradans (strain 2-40 / ATCC 43961 / DSM 17024) protein is Large ribosomal subunit protein uL23.